We begin with the raw amino-acid sequence, 263 residues long: Zinc transporter ZupT (263 aa).

Helical transmembrane passes span 1–21, 37–57, 68–88, 116–136, and 138–158; these read MLFA…GGLI, LGFS…PGAF, GGSW…AIID, MMKM…PEGF, and TFLA…AIAI. Asn131 and Glu134 together coordinate Fe(2+). Glu134 serves as a coordination point for Zn(2+). Zn(2+) is bound at residue His159. Residues Asn160, Glu163, and Glu192 each contribute to the Fe(2+) site. A Zn(2+)-binding site is contributed by Glu163. 3 consecutive transmembrane segments (helical) span residues 184-204, 206-226, and 243-263; these read WATL…LLLM, FIGP…MVFI, and TAIY…LLFI.

Belongs to the ZIP transporter (TC 2.A.5) family. ZupT subfamily.

It is found in the cell membrane. The enzyme catalyses Zn(2+)(in) = Zn(2+)(out). Its function is as follows. Mediates zinc uptake. May also transport other divalent cations. This Corynebacterium glutamicum (strain ATCC 13032 / DSM 20300 / JCM 1318 / BCRC 11384 / CCUG 27702 / LMG 3730 / NBRC 12168 / NCIMB 10025 / NRRL B-2784 / 534) protein is Zinc transporter ZupT.